A 453-amino-acid chain; its full sequence is tRNA-2-methylthio-N(6)-dimethylallyladenosine synthase (453 aa).

The MTTase N-terminal domain occupies 7–123 (GTYWITTFGC…LDTLLSQVEA (117 aa)). Residues Cys-16, Cys-52, Cys-86, Cys-158, Cys-162, and Cys-165 each coordinate [4Fe-4S] cluster. A Radical SAM core domain is found at 144–381 (RDSSLCAWVN…NALVERKAKA (238 aa)). One can recognise a TRAM domain in the interval 384 to 447 (QRYLGRVEEV…AFSLSGSAQA (64 aa)).

Belongs to the methylthiotransferase family. MiaB subfamily. In terms of assembly, monomer. [4Fe-4S] cluster is required as a cofactor.

Its subcellular location is the cytoplasm. It carries out the reaction N(6)-dimethylallyladenosine(37) in tRNA + (sulfur carrier)-SH + AH2 + 2 S-adenosyl-L-methionine = 2-methylsulfanyl-N(6)-dimethylallyladenosine(37) in tRNA + (sulfur carrier)-H + 5'-deoxyadenosine + L-methionine + A + S-adenosyl-L-homocysteine + 2 H(+). Catalyzes the methylthiolation of N6-(dimethylallyl)adenosine (i(6)A), leading to the formation of 2-methylthio-N6-(dimethylallyl)adenosine (ms(2)i(6)A) at position 37 in tRNAs that read codons beginning with uridine. This Synechococcus sp. (strain RCC307) protein is tRNA-2-methylthio-N(6)-dimethylallyladenosine synthase.